The chain runs to 427 residues: Peptidase B (427 aa).

Residues K195 and D200 each coordinate Mn(2+). Residue K207 is part of the active site. Residues D218, D277, and E279 each coordinate Mn(2+). R281 is a catalytic residue.

Belongs to the peptidase M17 family. Homohexamer. Mn(2+) serves as cofactor.

The protein localises to the cytoplasm. The catalysed reaction is Release of an N-terminal amino acid, Xaa, from a peptide or arylamide. Xaa is preferably Glu or Asp but may be other amino acids, including Leu, Met, His, Cys and Gln.. Its function is as follows. Probably plays an important role in intracellular peptide degradation. This Escherichia coli (strain UTI89 / UPEC) protein is Peptidase B.